The sequence spans 313 residues: tRNA dimethylallyltransferase (313 aa).

12 to 19 (GPTASGKS) is an ATP binding site. 14–19 (TASGKS) is a substrate binding site. Interaction with substrate tRNA regions lie at residues 37-40 (DSMQ) and 161-165 (QRSIR).

It belongs to the IPP transferase family. In terms of assembly, monomer. It depends on Mg(2+) as a cofactor.

It catalyses the reaction adenosine(37) in tRNA + dimethylallyl diphosphate = N(6)-dimethylallyladenosine(37) in tRNA + diphosphate. Catalyzes the transfer of a dimethylallyl group onto the adenine at position 37 in tRNAs that read codons beginning with uridine, leading to the formation of N6-(dimethylallyl)adenosine (i(6)A). The protein is tRNA dimethylallyltransferase of Pelagibacter ubique (strain HTCC1062).